Consider the following 161-residue polypeptide: MIMRILGIDPGLANVGWGILDRKGSKYMYVQDGTVITHPFMSLKDRLKLISDEIILIIDNFKPDVASIENIYFAKNKKTAISVSEARGAIILTFALKNLDFYEYTPIQVKNSISGFGRIEKVQVKYVIRILLGMKPDFIFTSDHSSDALALAICHGNYHIL.

Residues Asp9, Glu69, and His144 contribute to the active site. Asp9, Glu69, and His144 together coordinate Mg(2+).

It belongs to the RuvC family. In terms of assembly, homodimer which binds Holliday junction (HJ) DNA. The HJ becomes 2-fold symmetrical on binding to RuvC with unstacked arms; it has a different conformation from HJ DNA in complex with RuvA. In the full resolvosome a probable DNA-RuvA(4)-RuvB(12)-RuvC(2) complex forms which resolves the HJ. Mg(2+) serves as cofactor.

Its subcellular location is the cytoplasm. It catalyses the reaction Endonucleolytic cleavage at a junction such as a reciprocal single-stranded crossover between two homologous DNA duplexes (Holliday junction).. In terms of biological role, the RuvA-RuvB-RuvC complex processes Holliday junction (HJ) DNA during genetic recombination and DNA repair. Endonuclease that resolves HJ intermediates. Cleaves cruciform DNA by making single-stranded nicks across the HJ at symmetrical positions within the homologous arms, yielding a 5'-phosphate and a 3'-hydroxyl group; requires a central core of homology in the junction. The consensus cleavage sequence is 5'-(A/T)TT(C/G)-3'. Cleavage occurs on the 3'-side of the TT dinucleotide at the point of strand exchange. HJ branch migration catalyzed by RuvA-RuvB allows RuvC to scan DNA until it finds its consensus sequence, where it cleaves and resolves the cruciform DNA. This chain is Crossover junction endodeoxyribonuclease RuvC, found in Borrelia turicatae (strain 91E135).